The chain runs to 417 residues: NADH-quinone oxidoreductase subunit D (417 aa).

This sequence belongs to the complex I 49 kDa subunit family. In terms of assembly, NDH-1 is composed of 14 different subunits. Subunits NuoB, C, D, E, F, and G constitute the peripheral sector of the complex.

It localises to the cell inner membrane. The catalysed reaction is a quinone + NADH + 5 H(+)(in) = a quinol + NAD(+) + 4 H(+)(out). Its function is as follows. NDH-1 shuttles electrons from NADH, via FMN and iron-sulfur (Fe-S) centers, to quinones in the respiratory chain. The immediate electron acceptor for the enzyme in this species is believed to be ubiquinone. Couples the redox reaction to proton translocation (for every two electrons transferred, four hydrogen ions are translocated across the cytoplasmic membrane), and thus conserves the redox energy in a proton gradient. This is NADH-quinone oxidoreductase subunit D from Ruthia magnifica subsp. Calyptogena magnifica.